The chain runs to 361 residues: 3-dehydroquinate synthase (361 aa).

Residues 72–77 (SGEKEK), 130–131 (TT), K142, and K151 contribute to the NAD(+) site. Zn(2+) is bound by residues E184, H247, and H264.

The protein belongs to the sugar phosphate cyclases superfamily. Dehydroquinate synthase family. Co(2+) is required as a cofactor. Zn(2+) serves as cofactor. It depends on NAD(+) as a cofactor.

Its subcellular location is the cytoplasm. The catalysed reaction is 7-phospho-2-dehydro-3-deoxy-D-arabino-heptonate = 3-dehydroquinate + phosphate. It participates in metabolic intermediate biosynthesis; chorismate biosynthesis; chorismate from D-erythrose 4-phosphate and phosphoenolpyruvate: step 2/7. Its function is as follows. Catalyzes the conversion of 3-deoxy-D-arabino-heptulosonate 7-phosphate (DAHP) to dehydroquinate (DHQ). In Bacillus cereus (strain B4264), this protein is 3-dehydroquinate synthase.